Here is a 495-residue protein sequence, read N- to C-terminus: Surface E' protein (495 aa).

A helical membrane pass occupies residues 224 to 235 (GTLIGLVALIGV).

The protein localises to the cell membrane. The polypeptide is Surface E' protein (cbbE') (Coxiella burnetii).